A 187-amino-acid polypeptide reads, in one-letter code: Ubiquinone biosynthesis protein COQ4 homolog, mitochondrial (187 aa).

Zn(2+)-binding residues include histidine 77, aspartate 78, histidine 81, and glutamate 93.

Belongs to the COQ4 family. In terms of assembly, component of a multi-subunit COQ enzyme complex. The cofactor is Zn(2+).

The protein resides in the mitochondrion inner membrane. It carries out the reaction a 4-hydroxy-3-methoxy-5-(all-trans-polyprenyl)benzoate + H(+) = a 2-methoxy-6-(all-trans-polyprenyl)phenol + CO2. It functions in the pathway cofactor biosynthesis; ubiquinone biosynthesis. Its function is as follows. Lyase that catalyzes the C1-decarboxylation of 4-hydroxy-3-methoxy-5-(all-trans-polyprenyl)benzoic acid into 2-methoxy-6-(all-trans-polyprenyl)phenol during ubiquinone biosynthesis. This chain is Ubiquinone biosynthesis protein COQ4 homolog, mitochondrial, found in Leishmania major.